We begin with the raw amino-acid sequence, 168 residues long: Cell division inhibitor SulA (168 aa).

Residues 105-111 are ftsZ binding; sequence ALETGNY. A lon protease binding region spans residues 161-168; it reads RIHSRMVH.

Belongs to the SulA family. As to quaternary structure, interacts with FtsZ. Is rapidly cleaved and degraded by the Lon protease once DNA damage is repaired.

In terms of biological role, component of the SOS system and an inhibitor of cell division. Accumulation of SulA causes rapid cessation of cell division and the appearance of long, non-septate filaments. In the presence of GTP, binds a polymerization-competent form of FtsZ in a 1:1 ratio, thus inhibiting FtsZ polymerization and therefore preventing it from participating in the assembly of the Z ring. This mechanism prevents the premature segregation of damaged DNA to daughter cells during cell division. The polypeptide is Cell division inhibitor SulA (Cronobacter turicensis (strain DSM 18703 / CCUG 55852 / LMG 23827 / z3032)).